A 532-amino-acid polypeptide reads, in one-letter code: E3 ubiquitin-protein ligase MGRN1 (532 aa).

Residue Gly-2 is the site of N-myristoyl glycine attachment. An RING-type zinc finger spans residues 277 to 316; the sequence is ECVVCLSDLRDTLILPCRHLCLCTSCADTLRYQANNCPIC. The Required for TSG101-binding motif lies at 384 to 387; sequence PSAP. Tyr-389 carries the phosphotyrosine modification. A disordered region spans residues 419–518; the sequence is LQKGKTQSKS…QPVPPADIYL (100 aa). Positions 422–435 are enriched in polar residues; the sequence is GKTQSKSPDSTLRS. Phosphoserine is present on residues Ser-428, Ser-449, Ser-452, and Ser-501. The segment covering 442–453 has biased composition (acidic residues); the sequence is EEDEEKLSEDSD.

Interacts with MC1R and MC4R. Interacts with TSG101. Interacts with mislocalized cytosolically exposed PRNP; this interaction alters MGRN1 subcellular location and causes lysosomal enlargement. In terms of processing, autoubiquitinated in vitro. As to expression, widely expressed, with highest levels in brain, heart, kidney and liver. In the CNS, especially prominent in the Purkinje cells of the cerebellum. In the skin, expressed in the basal layer of the epidermis and hair follicles, primarily in the outer root sheath. Isoforms 1, 3, 4 and 5 are equally expressed in the liver. Isoforms 1, 3 and 4 are most abundant in brain, kidney and heart, respectively.

It is found in the early endosome. The protein resides in the cytoplasm. It localises to the cell membrane. The protein localises to the nucleus. It carries out the reaction S-ubiquitinyl-[E2 ubiquitin-conjugating enzyme]-L-cysteine + [acceptor protein]-L-lysine = [E2 ubiquitin-conjugating enzyme]-L-cysteine + N(6)-ubiquitinyl-[acceptor protein]-L-lysine.. Its pathway is protein modification; protein ubiquitination. Its function is as follows. E3 ubiquitin-protein ligase. Mediates TSG101 monoubiquitination at multiple sites. Plays a role in the regulation of endosome-to-lysosome trafficking. Impairs MC1R- and MC4R-signaling by competing with GNAS-binding to MCRs and inhibiting agonist-induced cAMP production. Does not inhibit ADRB2-signaling. Does not promote MC1R ubiquitination. Also acts as a negative regulator of hedgehog signaling. The chain is E3 ubiquitin-protein ligase MGRN1 (Mgrn1) from Mus musculus (Mouse).